The primary structure comprises 90 residues: Probable Fe(2+)-trafficking protein (90 aa).

The protein belongs to the Fe(2+)-trafficking protein family.

Functionally, could be a mediator in iron transactions between iron acquisition and iron-requiring processes, such as synthesis and/or repair of Fe-S clusters in biosynthetic enzymes. This Pseudomonas syringae pv. tomato (strain ATCC BAA-871 / DC3000) protein is Probable Fe(2+)-trafficking protein.